We begin with the raw amino-acid sequence, 158 residues long: 6,7-dimethyl-8-ribityllumazine synthase (158 aa).

5-amino-6-(D-ribitylamino)uracil is bound by residues Phe-24, 62–64 (CFE), and 86–88 (AVI). 91–92 (DT) provides a ligand contact to (2S)-2-hydroxy-3-oxobutyl phosphate. Residue His-94 is the Proton donor of the active site. Position 119 (Phe-119) interacts with 5-amino-6-(D-ribitylamino)uracil. Arg-133 contributes to the (2S)-2-hydroxy-3-oxobutyl phosphate binding site.

It belongs to the DMRL synthase family.

It carries out the reaction (2S)-2-hydroxy-3-oxobutyl phosphate + 5-amino-6-(D-ribitylamino)uracil = 6,7-dimethyl-8-(1-D-ribityl)lumazine + phosphate + 2 H2O + H(+). Its pathway is cofactor biosynthesis; riboflavin biosynthesis; riboflavin from 2-hydroxy-3-oxobutyl phosphate and 5-amino-6-(D-ribitylamino)uracil: step 1/2. In terms of biological role, catalyzes the formation of 6,7-dimethyl-8-ribityllumazine by condensation of 5-amino-6-(D-ribitylamino)uracil with 3,4-dihydroxy-2-butanone 4-phosphate. This is the penultimate step in the biosynthesis of riboflavin. This Picosynechococcus sp. (strain ATCC 27264 / PCC 7002 / PR-6) (Agmenellum quadruplicatum) protein is 6,7-dimethyl-8-ribityllumazine synthase.